An 80-amino-acid chain; its full sequence is MGFTKILVTFFLVGLLVISSSPQNAIASEIKAKINGLECFNTCTSYYDDHKCNVDCLSSGYPAGECYTVSPSQPKKCCCY.

A signal peptide spans 1–27 (MGFTKILVTFFLVGLLVISSSPQNAIA). Cystine bridges form between Cys39/Cys79, Cys43/Cys66, Cys52/Cys77, and Cys56/Cys78.

Belongs to the DEFL family.

Its subcellular location is the secreted. This chain is Defensin-like protein 51 (LCR48), found in Arabidopsis thaliana (Mouse-ear cress).